The chain runs to 370 residues: Alanine racemase (370 aa).

Residue Lys-39 is the Proton acceptor; specific for D-alanine of the active site. An N6-(pyridoxal phosphate)lysine modification is found at Lys-39. Substrate is bound at residue Arg-137. Tyr-258 acts as the Proton acceptor; specific for L-alanine in catalysis. Residue Met-306 participates in substrate binding.

It belongs to the alanine racemase family. It depends on pyridoxal 5'-phosphate as a cofactor.

The catalysed reaction is L-alanine = D-alanine. It participates in amino-acid biosynthesis; D-alanine biosynthesis; D-alanine from L-alanine: step 1/1. Functionally, catalyzes the interconversion of L-alanine and D-alanine. May also act on other amino acids. This is Alanine racemase (alr) from Methylobacterium nodulans (strain LMG 21967 / CNCM I-2342 / ORS 2060).